The chain runs to 1357 residues: DNA-directed RNA polymerase subunit beta (1357 aa).

It belongs to the RNA polymerase beta chain family. As to quaternary structure, the RNAP catalytic core consists of 2 alpha, 1 beta, 1 beta' and 1 omega subunit. When a sigma factor is associated with the core the holoenzyme is formed, which can initiate transcription.

It carries out the reaction RNA(n) + a ribonucleoside 5'-triphosphate = RNA(n+1) + diphosphate. Its function is as follows. DNA-dependent RNA polymerase catalyzes the transcription of DNA into RNA using the four ribonucleoside triphosphates as substrates. The chain is DNA-directed RNA polymerase subunit beta from Pseudomonas paraeruginosa (strain DSM 24068 / PA7) (Pseudomonas aeruginosa (strain PA7)).